Consider the following 325-residue polypeptide: Aerobic respiration control sensor protein ArcB homolog (325 aa).

Residues 1 to 26 (MKNFKYFAQSYVDWVIRLGRLRFSLL) lie on the Cytoplasmic side of the membrane. The helical transmembrane segment at 27-47 (GVMILAVLALCTQILFSLFIV) threads the bilayer. The Periplasmic segment spans residues 48–57 (HQISWVDIFR). Residues 58-78 (SVTFGLLTAPFVIYFFTLLVE) form a helical membrane-spanning segment. The Cytoplasmic segment spans residues 79–325 (KLEHSRLDLS…AQLMGRGFNS (247 aa)). One can recognise a Histidine kinase domain in the interval 128 to 325 (TISHEFRTPL…AQLMGRGFNS (198 aa)). His131 bears the Phosphohistidine; by autocatalysis mark.

The protein resides in the cell inner membrane. It catalyses the reaction ATP + protein L-histidine = ADP + protein N-phospho-L-histidine.. In terms of biological role, member of the two-component regulatory system ArcB/ArcA. Activates ArcA by phosphorylation. This Haemophilus influenzae (strain ATCC 51907 / DSM 11121 / KW20 / Rd) protein is Aerobic respiration control sensor protein ArcB homolog (arcB).